The primary structure comprises 1296 residues: Probable serine/threonine protein kinase IREH1 (1296 aa).

Disordered regions lie at residues 1-274 (MVFK…SESP), 457-480 (SGAG…QEQH), and 524-553 (SPAL…VGSR). Over residues 10 to 32 (SSKKSGSSSPDSSNSPRSVGSNS) the composition is skewed to low complexity. Ser-32 is subject to Phosphoserine. Basic and acidic residues-rich tracts occupy residues 68 to 77 (DGLKKKDGSS), 101 to 112 (EVKKPPPPEVKE), and 178 to 208 (RKKE…RDSL). Positions 214–249 (PPRSLSPTLPPSGSRLQNVASSSGTGRSEMSSGRSG) are enriched in low complexity. The C2H2-type; atypical zinc finger occupies 602 to 621 (CRICEEEVPTTHVEDHSRVC). A disordered region spans residues 724-750 (FGPKSDQGMTTSSASSMTPRSPIPTPR). Residues 730–740 (QGMTTSSASSM) show a composition bias toward polar residues. One can recognise a Protein kinase domain in the interval 882–1171 (FEIIKPISRG…AAEVKQHIFF (290 aa)). Residues 888–896 (ISRGAFGRV) and Lys-911 contribute to the ATP site. The Proton acceptor role is filled by Asp-1005. Ser-1070 carries the post-translational modification Phosphoserine. Residues 1172–1277 (KDINWDTLAR…KNLSQLASIN (106 aa)) enclose the AGC-kinase C-terminal domain. A disordered region spans residues 1214-1245 (PSGEVPDYSDADSMTNSSGCSSNHHEEGEAEE). The segment covering 1225–1235 (DSMTNSSGCSS) has biased composition (polar residues). The segment covering 1236-1245 (NHHEEGEAEE) has biased composition (basic and acidic residues).

This sequence belongs to the protein kinase superfamily. AGC Ser/Thr protein kinase family.

It carries out the reaction L-seryl-[protein] + ATP = O-phospho-L-seryl-[protein] + ADP + H(+). It catalyses the reaction L-threonyl-[protein] + ATP = O-phospho-L-threonyl-[protein] + ADP + H(+). In terms of biological role, may be involved in root hair elongation. In Arabidopsis thaliana (Mouse-ear cress), this protein is Probable serine/threonine protein kinase IREH1.